A 567-amino-acid chain; its full sequence is Dihydroxy-acid dehydratase (567 aa).

Cysteine 52 contributes to the [2Fe-2S] cluster binding site. Position 84 (aspartate 84) interacts with Mg(2+). Cysteine 125 provides a ligand contact to [2Fe-2S] cluster. 2 residues coordinate Mg(2+): aspartate 126 and lysine 127. N6-carboxylysine is present on lysine 127. [2Fe-2S] cluster is bound at residue cysteine 197. Position 448 (glutamate 448) interacts with Mg(2+). Catalysis depends on serine 474, which acts as the Proton acceptor.

Belongs to the IlvD/Edd family. As to quaternary structure, homodimer. It depends on [2Fe-2S] cluster as a cofactor. Mg(2+) is required as a cofactor.

The catalysed reaction is (2R)-2,3-dihydroxy-3-methylbutanoate = 3-methyl-2-oxobutanoate + H2O. It carries out the reaction (2R,3R)-2,3-dihydroxy-3-methylpentanoate = (S)-3-methyl-2-oxopentanoate + H2O. Its pathway is amino-acid biosynthesis; L-isoleucine biosynthesis; L-isoleucine from 2-oxobutanoate: step 3/4. The protein operates within amino-acid biosynthesis; L-valine biosynthesis; L-valine from pyruvate: step 3/4. Functionally, functions in the biosynthesis of branched-chain amino acids. Catalyzes the dehydration of (2R,3R)-2,3-dihydroxy-3-methylpentanoate (2,3-dihydroxy-3-methylvalerate) into 2-oxo-3-methylpentanoate (2-oxo-3-methylvalerate) and of (2R)-2,3-dihydroxy-3-methylbutanoate (2,3-dihydroxyisovalerate) into 2-oxo-3-methylbutanoate (2-oxoisovalerate), the penultimate precursor to L-isoleucine and L-valine, respectively. The protein is Dihydroxy-acid dehydratase of Streptococcus pneumoniae serotype 2 (strain D39 / NCTC 7466).